A 254-amino-acid chain; its full sequence is Alcohol dehydrogenase (254 aa).

10-33 contacts NAD(+); that stretch reads FVAGLGGIGLDTSREIVKSGPKNL. Ser138 contributes to the substrate binding site. The active-site Proton acceptor is Tyr151.

Belongs to the short-chain dehydrogenases/reductases (SDR) family. Homodimer.

The catalysed reaction is a primary alcohol + NAD(+) = an aldehyde + NADH + H(+). It catalyses the reaction a secondary alcohol + NAD(+) = a ketone + NADH + H(+). This Drosophila adiastola (Fruit fly) protein is Alcohol dehydrogenase (Adh).